The chain runs to 357 residues: D-alanine--D-alanine ligase (357 aa).

The ATP-grasp domain maps to 145–339 (KEVMLYHGIQ…YGDLVMDIVN (195 aa)). 172 to 225 (PFDFPVVVKPTSGGSSVGTHIIHNQEELESGLEDVFRFDNSAIVEEFTPGREFS) is a binding site for ATP. The Mg(2+) site is built by aspartate 294, glutamate 306, and asparagine 308.

Belongs to the D-alanine--D-alanine ligase family. It depends on Mg(2+) as a cofactor. Mn(2+) is required as a cofactor.

Its subcellular location is the cytoplasm. It carries out the reaction 2 D-alanine + ATP = D-alanyl-D-alanine + ADP + phosphate + H(+). It participates in cell wall biogenesis; peptidoglycan biosynthesis. Its function is as follows. Cell wall formation. This is D-alanine--D-alanine ligase from Lacticaseibacillus paracasei (strain ATCC 334 / BCRC 17002 / CCUG 31169 / CIP 107868 / KCTC 3260 / NRRL B-441) (Lactobacillus paracasei).